The primary structure comprises 334 residues: Anthranilate phosphoribosyltransferase (334 aa).

Residues Gly79, 82 to 83 (GD), Ser87, 89 to 92 (NIST), 107 to 115 (KAGNRSISS), and Ser119 contribute to the 5-phospho-alpha-D-ribose 1-diphosphate site. Gly79 provides a ligand contact to anthranilate. Residue Ser91 participates in Mg(2+) binding. Asn110 lines the anthranilate pocket. An anthranilate-binding site is contributed by Arg165. Asp224 and Glu225 together coordinate Mg(2+).

This sequence belongs to the anthranilate phosphoribosyltransferase family. As to quaternary structure, homodimer. The cofactor is Mg(2+).

It carries out the reaction N-(5-phospho-beta-D-ribosyl)anthranilate + diphosphate = 5-phospho-alpha-D-ribose 1-diphosphate + anthranilate. It participates in amino-acid biosynthesis; L-tryptophan biosynthesis; L-tryptophan from chorismate: step 2/5. Functionally, catalyzes the transfer of the phosphoribosyl group of 5-phosphorylribose-1-pyrophosphate (PRPP) to anthranilate to yield N-(5'-phosphoribosyl)-anthranilate (PRA). This Streptococcus thermophilus (strain ATCC BAA-491 / LMD-9) protein is Anthranilate phosphoribosyltransferase.